The chain runs to 214 residues: MPEILKIKPTRMELLKLKRRVKLAERGHKLLKEKQDALIMEFFTIYDEALSLRRELIKKMEEAFEALRRAQVDVGSLRLKEISIGVKPNEEIEIRTRNIMGVRVPLIEVPELKRKASDRGYAFISTTSTVDVAAEKFEEVLELAIRLAEVEESLKRLGKEIEKTKRRVNALEYIIIPRMKNTIKFIEQHLDEMERENFFRLKRVKAILEARQSM.

Belongs to the V-ATPase D subunit family. In terms of assembly, has multiple subunits with at least A(3), B(3), C, D, E, F, H, I and proteolipid K(x).

The protein localises to the cell membrane. In terms of biological role, component of the A-type ATP synthase that produces ATP from ADP in the presence of a proton gradient across the membrane. The sequence is that of A-type ATP synthase subunit D from Pyrococcus abyssi (strain GE5 / Orsay).